Reading from the N-terminus, the 139-residue chain is Small ribosomal subunit protein bS6 (139 aa).

The interval Leu-119 to Lys-139 is disordered. The span at Gly-130–Lys-139 shows a compositional bias: polar residues.

It belongs to the bacterial ribosomal protein bS6 family.

In terms of biological role, binds together with bS18 to 16S ribosomal RNA. The protein is Small ribosomal subunit protein bS6 of Borreliella burgdorferi (strain ZS7) (Borrelia burgdorferi).